Here is a 277-residue protein sequence, read N- to C-terminus: Large ribosomal subunit protein uL2cz/uL2cy (277 aa).

Disordered stretches follow at residues 1–31 and 227–277; these read MAIHLYKTSTPSTRNGAVDSQAKSNTRNTRK and NPVD…RRSK.

This sequence belongs to the universal ribosomal protein uL2 family. Part of the 50S ribosomal subunit.

The protein resides in the plastid. It localises to the chloroplast. The protein is Large ribosomal subunit protein uL2cz/uL2cy (rpl2-A) of Manihot esculenta (Cassava).